Here is a 710-residue protein sequence, read N- to C-terminus: Tubulin polyglutamylase TTLL11 (710 aa).

The interval 41–135 (VRVDAGAAGE…QRPVTVDSSK (95 aa)) is disordered. The segment covering 51–60 (PECKAGEEQP) has biased composition (basic and acidic residues). Positions 64–82 (APAPAQPSAAEEGNTQVLQ) are enriched in low complexity. The span at 83 to 93 (RPPPTLPPSKP) shows a compositional bias: pro residues. Over residues 123–135 (NGSQRPVTVDSSK) the composition is skewed to polar residues. A TTL domain is found at 128-480 (PVTVDSSKAR…EVKVAVIRDT (353 aa)). ATP-binding positions include lysine 249, 255–256 (QG), 282–285 (QEYI), and 295–297 (KFD). Glutamine 255 contacts a protein. Position 321 (arginine 321) interacts with L-glutamate. 343–344 (TN) contacts ATP. Tyrosine 345, serine 346, and lysine 365 together coordinate L-glutamate. Mg(2+)-binding residues include aspartate 428, glutamate 441, and asparagine 443. Residues 467–538 (LVDEEVKVAV…SICLKQVFPK (72 aa)) are c-MTBD region. Lysine 473 is a binding site for L-glutamate. Positions 665–710 (GVPSGGRPPHRGPPQEPSPSAQPAGDNPPPRTSCANKLSHPRHTLS) are disordered.

Belongs to the tubulin--tyrosine ligase family. Requires Mg(2+) as cofactor.

It localises to the cytoplasm. The protein resides in the cytoskeleton. The protein localises to the cilium basal body. It catalyses the reaction L-glutamyl-[protein] + L-glutamate + ATP = gamma-L-glutamyl-L-glutamyl-[protein] + ADP + phosphate + H(+). The catalysed reaction is (L-glutamyl)(n)-gamma-L-glutamyl-L-glutamyl-[protein] + L-glutamate + ATP = (L-glutamyl)(n+1)-gamma-L-glutamyl-L-glutamyl-[protein] + ADP + phosphate + H(+). Polyglutamylase which modifies tubulin, generating polyglutamate side chains of variable lengths on the gamma-carboxyl group of specific glutamate residues within the C-terminal tail of tubulin. Preferentially mediates ATP-dependent polyglutamate long side-chain elongation over the initiation step of the polyglutamylation reaction. Preferentially modifies the alpha-tubulin tail over a beta-tail. Required for CCSAP localization to both spindle and cilia microtubules. Promotes tubulin polyglutamylation which stimulates spastin/SPAST-mediated microtubule severing, thereby regulating microtubule functions. The polypeptide is Tubulin polyglutamylase TTLL11 (Homo sapiens (Human)).